The chain runs to 94 residues: Large ribosomal subunit protein bL27 (94 aa).

The propeptide occupies 1–9 (MLRLDLQFF).

This sequence belongs to the bacterial ribosomal protein bL27 family. The N-terminus is cleaved by ribosomal processing cysteine protease Prp.

This chain is Large ribosomal subunit protein bL27, found in Bacillus velezensis (strain DSM 23117 / BGSC 10A6 / LMG 26770 / FZB42) (Bacillus amyloliquefaciens subsp. plantarum).